A 403-amino-acid polypeptide reads, in one-letter code: Probable tRNA sulfurtransferase (403 aa).

The region spanning 60-165 is the THUMP domain; the sequence is QLVEERLKPI…KEGVFLSCRT (106 aa). ATP is bound by residues 183–184, 208–209, Arg-265, Gly-287, and Gln-296; these read ML and HF.

It belongs to the ThiI family.

The protein resides in the cytoplasm. The enzyme catalyses [ThiI sulfur-carrier protein]-S-sulfanyl-L-cysteine + a uridine in tRNA + 2 reduced [2Fe-2S]-[ferredoxin] + ATP + H(+) = [ThiI sulfur-carrier protein]-L-cysteine + a 4-thiouridine in tRNA + 2 oxidized [2Fe-2S]-[ferredoxin] + AMP + diphosphate. It catalyses the reaction [ThiS sulfur-carrier protein]-C-terminal Gly-Gly-AMP + S-sulfanyl-L-cysteinyl-[cysteine desulfurase] + AH2 = [ThiS sulfur-carrier protein]-C-terminal-Gly-aminoethanethioate + L-cysteinyl-[cysteine desulfurase] + A + AMP + 2 H(+). The protein operates within cofactor biosynthesis; thiamine diphosphate biosynthesis. Its function is as follows. Catalyzes the ATP-dependent transfer of a sulfur to tRNA to produce 4-thiouridine in position 8 of tRNAs, which functions as a near-UV photosensor. Also catalyzes the transfer of sulfur to the sulfur carrier protein ThiS, forming ThiS-thiocarboxylate. This is a step in the synthesis of thiazole, in the thiamine biosynthesis pathway. The sulfur is donated as persulfide by IscS. The sequence is that of Probable tRNA sulfurtransferase from Listeria monocytogenes serotype 4b (strain CLIP80459).